Here is a 273-residue protein sequence, read N- to C-terminus: N-alpha-acetyltransferase 30 (273 aa).

Disordered stretches follow at residues 1 to 39 and 62 to 85; these read MADAPSGPSVLSHYPGAGLAGEQQREEERHKGCHHHQLN and QKTRKDSGLVQPQGRTDTRAPNGL. Residues 125–273 form the N-acetyltransferase domain; that stretch reads RYVRYESELQ…DALRLKLWLR (149 aa).

The protein belongs to the acetyltransferase family. MAK3 subfamily. In terms of assembly, component of the N-terminal acetyltransferase C (NatC) complex.

It is found in the cytoplasm. The protein localises to the nucleus. The catalysed reaction is N-terminal L-methionyl-L-leucyl-[protein] + acetyl-CoA = N-terminal N(alpha)-acetyl-L-methionyl-L-leucyl-[protein] + CoA + H(+). It catalyses the reaction N-terminal L-methionyl-L-isoleucyl-[protein] + acetyl-CoA = N-terminal N(alpha)-acetyl-L-methionyl-L-isoleucyl-[protein] + CoA + H(+). It carries out the reaction N-terminal L-methionyl-L-phenylalanyl-[protein] + acetyl-CoA = N-terminal N(alpha)-acetyl-L-methionyl-L-phenylalanyl-[protein] + CoA + H(+). The enzyme catalyses N-terminal L-methionyl-L-tryptophyl-[protein] + acetyl-CoA = N-terminal N(alpha)-acetyl-L-methionyl-L-tryptophyl-[protein] + CoA + H(+). The catalysed reaction is N-terminal L-methionyl-L-tyrosyl-[protein] + acetyl-CoA = N-terminal N(alpha)-acetyl-L-methionyl-L-tyrosyl-[protein] + CoA + H(+). Catalytic subunit of the N-terminal acetyltransferase C (NatC) complex. Catalyzes acetylation of the N-terminal methionine residues of peptides beginning with Met-Leu-Ala and Met-Leu-Gly. N-terminal acetylation protects proteins from ubiquitination and degradation by the N-end rule pathway. The protein is N-alpha-acetyltransferase 30 (naa30) of Xenopus laevis (African clawed frog).